We begin with the raw amino-acid sequence, 285 residues long: MLIIRNKQELKEVILKQKQANKTIGFVPTMGFLHEGHMTLVSHARKESDFVVMSVFVNPTQFGPNEDFDAYPRDEAHDAKLAEEGGVDILFVPTVEEIYPTELSTKLHVDKRVSVLDGADREGHFDGVVTVLTKLFHLVSPDNAYFGQKDAQQVAVVSGLVEDYFFPVNLRIIATVREADGLAKSSRNVYLTEKERKEAPVIHEALQLGRKLIESGETNQAKIVQMMTEKINEQTSHELIAYLAIYSYPEFTPVTDWSKGIIIAAAVKYSKARLIDNELINVKRR.

ATP is bound at residue Met-30–His-37. The active-site Proton donor is the His-37. A (R)-pantoate-binding site is contributed by Gln-61. Gln-61 provides a ligand contact to beta-alanine. Gly-147–Asp-150 is a binding site for ATP. Residue Gln-153 coordinates (R)-pantoate. ATP is bound by residues Val-176 and Lys-184–Arg-187.

Belongs to the pantothenate synthetase family. As to quaternary structure, homodimer.

It is found in the cytoplasm. It carries out the reaction (R)-pantoate + beta-alanine + ATP = (R)-pantothenate + AMP + diphosphate + H(+). It participates in cofactor biosynthesis; (R)-pantothenate biosynthesis; (R)-pantothenate from (R)-pantoate and beta-alanine: step 1/1. In terms of biological role, catalyzes the condensation of pantoate with beta-alanine in an ATP-dependent reaction via a pantoyl-adenylate intermediate. This chain is Pantothenate synthetase, found in Listeria monocytogenes serovar 1/2a (strain ATCC BAA-679 / EGD-e).